The following is a 545-amino-acid chain: Probable quinate permease (545 aa).

Residues 1–22 (MSILSLVEDRPTPKEVYNWRIY) are Cytoplasmic-facing. The chain crosses the membrane as a helical span at residues 23–43 (LLAAVASFTSCMIGYDSAFIG). At 44 to 66 (TTISLQSFKDEFNWDAMSTDKQN) the chain is on the extracellular side. The helical transmembrane segment at 67–87 (LISANIVSLYQAGAFFGAFFA) threads the bilayer. The Cytoplasmic segment spans residues 88 to 97 (YPMGHFWGRR). Residues 98–118 (WGLFVAALVFTLGAGLMLGAN) traverse the membrane as a helical segment. Residues 119–130 (GDRGLGLIYGGR) are Extracellular-facing. A helical membrane pass occupies residues 131-151 (VLAGLGVGAGSNITPIYISEL). Residues 152-159 (APPAIRGR) lie on the Cytoplasmic side of the membrane. A helical membrane pass occupies residues 160-180 (LVGVYELGWQIGGLVGFWICF). Residues 181–193 (GVDDTLAPSHKQW) are Extracellular-facing. Residues 194 to 214 (IIPFAVQLIPSGLLLLGILFV) traverse the membrane as a helical segment. At 215 to 285 (RESPRWLFLR…VWSNKRIMYR (71 aa)) the chain is on the cytoplasmic side. The helical transmembrane segment at 286-306 (LFLGSMLFLWQNGSGINAINY) threads the bilayer. The Extracellular segment spans residues 307 to 325 (YSPTVFKSIGLRGANTSLL). A helical transmembrane segment spans residues 326 to 346 (TTGIFGVVKTVVTFVWLLWLI). Residues 347–352 (DRLGRR) lie on the Cytoplasmic side of the membrane. A helical membrane pass occupies residues 353–373 (LLLMIGAAGGSVCLWIVGAYI). Residues 374–384 (KVAKPTERDPD) are Extracellular-facing. A helical membrane pass occupies residues 385 to 405 (APLDGGGIAAMFFFYLWTVFY). Topologically, residues 406 to 457 (TPSWNGTPWVMNSEMFDPNVRSLAQACAAGSNWLWNFLISRFTPQMFAKMEY) are cytoplasmic. The helical transmembrane segment at 458–478 (GVYFFFASLMILSIVFVFFLI) threads the bilayer. Residues 479-545 (PETKGIPLES…VEQAESVPKA (67 aa)) are Extracellular-facing. Residues 520 to 545 (IEESGYTKSDAQQVERVEQAESVPKA) form a disordered region.

This sequence belongs to the major facilitator superfamily. Sugar transporter (TC 2.A.1.1) family. In terms of assembly, interacts with creB. Post-translationally, ubiquitinated. Deubiquitinated by creB, probably to control its activity or amount.

It localises to the cell membrane. In terms of biological role, integral membrane transporter that imports quinic acid to be catabolized as a carbon source. The chain is Probable quinate permease (qutD) from Aspergillus terreus (strain NIH 2624 / FGSC A1156).